The following is a 535-amino-acid chain: Dual specificity mitogen-activated protein kinase kinase 7 (535 aa).

N-acetylalanine is present on A2. Residues 2–30 (AASSLEQKLSRLEAKLKQENREARRRIDL) are a coiled coil. Positions 37 to 73 (QRPRPIIVITLSPAPAPSQRAALQLPLANDGGSRSPS) are d domain. The segment at 63-93 (LANDGGSRSPSSESSPQHPTPPTRPRHMLGL) is disordered. Low complexity predominate over residues 69–79 (SRSPSSESSPQ). The region spanning 136–396 (LENLGEMGSG…YNKLLEHSFI (261 aa)) is the Protein kinase domain. ATP-binding positions include 142-150 (MGSGTCGQV) and K165. D259 (proton acceptor) is an active-site residue. S287 carries the phosphoserine; by MAP3K modification. T291 carries the phosphothreonine; by MAP3K modification. Residues 393 to 416 (HSFIKHYEILEVDVASWFKDVMAK) are DVD domain. S427 bears the Phosphoserine mark.

Belongs to the protein kinase superfamily. STE Ser/Thr protein kinase family. MAP kinase kinase subfamily. As to quaternary structure, interacts with RASSF7, the interaction promotes phosphorylation. Interacts with VRK2. Interacts (via its D domain) with its substrates MAPK8/JNK1, MAPK9/JNK2 and MAPK10/JNK3. Interacts (via its DVD domain) with MAP3Ks activators like MAP3K5/ASK1 and MAP3K1/MEKK1. Interacts with SH3RF1, MAPK8IP1/JIP1, MAPK8IP2/JIP2 and MAPK8IP3/JIP3 scaffold proteins. Found in a complex with SH3RF1, RAC1, MAP3K11/MLK3, MAPK8IP1/JIP1 and MAPK8/JNK1. Found in a complex with SH3RF1, RAC2, MAP3K7/TAK1, MAPK8IP1/JIP1, MAPK8/JNK1 and MAPK9/JNK2. Mg(2+) is required as a cofactor. Post-translationally, activated by phosphorylation on Ser-287 and Thr-291 by MAP kinase kinase kinases (MAP3Ks). In terms of tissue distribution, expressed at high levels in brain, lung, liver, skeletal muscle, kidney, and testis and at lower levels in the heart and spleen.

It localises to the nucleus. The protein localises to the cytoplasm. It catalyses the reaction L-seryl-[protein] + ATP = O-phospho-L-seryl-[protein] + ADP + H(+). It carries out the reaction L-threonyl-[protein] + ATP = O-phospho-L-threonyl-[protein] + ADP + H(+). The catalysed reaction is L-tyrosyl-[protein] + ATP = O-phospho-L-tyrosyl-[protein] + ADP + H(+). Activated by phosphorylation by specific MAP kinase kinase kinases such as MAP3K1/MEKK1, MAP3K3/MEKK3, MAP3K11/MLK3 and MAP3K12/DLK. Isoforms 3 and 4 have lower basal activity but a higher level of inducible activation, than isoforms 2, 6, 7 and 8. Dual specificity protein kinase which acts as an essential component of the MAP kinase signal transduction pathway. Essential component of the stress-activated protein kinase/c-Jun N-terminal kinase (SAP/JNK) signaling pathway. With MAP2K4/MKK4, is the one of the only known kinase to directly activate the stress-activated protein kinase/c-Jun N-terminal kinases MAPK8/JNK1, MAPK9/JNK2 and MAPK10/JNK3. MAP2K4/MKK4 and MAP2K7/MKK7 both activate the JNKs by phosphorylation, but they differ in their preference for the phosphorylation site in the Thr-Pro-Tyr motif. MAP2K4/MKK4 shows preference for phosphorylation of the Tyr residue and MAP2K7/MKK7 for the Thr residue. The monophosphorylation of JNKs on the Thr residue is sufficient to increase JNK activity indicating that MAP2K7/MKK7 is important to trigger JNK activity, while the additional phosphorylation of the Tyr residue by MAP2K4/MKK4 ensures optimal JNK activation. Has a specific role in JNK signal transduction pathway activated by pro-inflammatory cytokines. The MKK/JNK signaling pathway is also involved in mitochondrial death signaling pathway, including the release cytochrome c, leading to apoptosis. Part of a non-canonical MAPK signaling pathway, composed of the upstream MAP3K12 kinase and downstream MAP kinases MAPK1/ERK2 and MAPK3/ERK1, that enhances the AP-1-mediated transcription of APP in response to APOE. The polypeptide is Dual specificity mitogen-activated protein kinase kinase 7 (Mus musculus (Mouse)).